The chain runs to 630 residues: 1-deoxy-D-xylulose-5-phosphate synthase (630 aa).

Residues His-72 and 113 to 115 (GHS) each bind thiamine diphosphate. Asp-144 lines the Mg(2+) pocket. Thiamine diphosphate contacts are provided by residues 145–146 (GA), Asn-173, Tyr-284, and Glu-367. Asn-173 is a binding site for Mg(2+).

This sequence belongs to the transketolase family. DXPS subfamily. In terms of assembly, homodimer. It depends on Mg(2+) as a cofactor. Thiamine diphosphate serves as cofactor.

It carries out the reaction D-glyceraldehyde 3-phosphate + pyruvate + H(+) = 1-deoxy-D-xylulose 5-phosphate + CO2. It functions in the pathway metabolic intermediate biosynthesis; 1-deoxy-D-xylulose 5-phosphate biosynthesis; 1-deoxy-D-xylulose 5-phosphate from D-glyceraldehyde 3-phosphate and pyruvate: step 1/1. Functionally, catalyzes the acyloin condensation reaction between C atoms 2 and 3 of pyruvate and glyceraldehyde 3-phosphate to yield 1-deoxy-D-xylulose-5-phosphate (DXP). This chain is 1-deoxy-D-xylulose-5-phosphate synthase, found in Geobacillus sp. (strain WCH70).